The chain runs to 190 residues: Ubiquinol-cytochrome c reductase iron-sulfur subunit (190 aa).

A helical transmembrane segment spans residues 18-39 (FLYYATAGAGTVAAGAAAWTLV). A Rieske domain is found at 95–188 (GQLIDRSAQN…AEFLDDTTIK (94 aa)). Residues cysteine 132, histidine 134, cysteine 152, and histidine 155 each coordinate [2Fe-2S] cluster. Residues cysteine 137 and cysteine 154 are joined by a disulfide bond.

It belongs to the Rieske iron-sulfur protein family. As to quaternary structure, the main subunits of complex b-c1 are: cytochrome b, cytochrome c1 and the Rieske protein. [2Fe-2S] cluster serves as cofactor.

It is found in the cell membrane. The enzyme catalyses a quinol + 2 Fe(III)-[cytochrome c](out) = a quinone + 2 Fe(II)-[cytochrome c](out) + 2 H(+)(out). Component of the ubiquinol-cytochrome c reductase complex (complex III or cytochrome b-c1 complex), which is a respiratory chain that generates an electrochemical potential coupled to ATP synthesis. In Paracoccus denitrificans, this protein is Ubiquinol-cytochrome c reductase iron-sulfur subunit (petA).